The chain runs to 89 residues: Dynein light chain 2, cytoplasmic (89 aa).

The protein belongs to the dynein light chain family. In terms of assembly, homodimer. The cytoplasmic dynein 1 complex consists of two catalytic heavy chains (HCs) and a number of non-catalytic subunits which present intermediate chains (ICs), light intermediate chains (LICs) and light chains (LCs); the composition seems to vary in respect to the IC, LIC and LC composition. The heavy chain homodimer serves as a scaffold for the probable homodimeric assembly of the respective non-catalytic subunits. Dynein ICs and LICs bind directly to the HC dimer and the LCs assemble on the IC dimer. Interacts with DYNC1I1. Interacts with BMF. Component of the myosin V motor complex. Interacts with BCAS1. Interacts with Basson/BSN. Interacts with AMBRA1 (via TQT motifs); tethering AMBRA1 to the cytoskeleton. Interacts with IQUB.

The protein resides in the cytoplasm. It localises to the cytoskeleton. Its function is as follows. Acts as one of several non-catalytic accessory components of the cytoplasmic dynein 1 complex that are thought to be involved in linking dynein to cargos and to adapter proteins that regulate dynein function. Cytoplasmic dynein 1 acts as a motor for the intracellular retrograde motility of vesicles and organelles along microtubules. May play a role in changing or maintaining the spatial distribution of cytoskeletal structures. The polypeptide is Dynein light chain 2, cytoplasmic (DYNLL2) (Homo sapiens (Human)).